The following is a 318-amino-acid chain: Inner membrane protein YbhN (318 aa).

Over 1–13 (MSKSHPRWRLAKK) the chain is Periplasmic. A helical transmembrane segment spans residues 14–34 (ILTWLFFIAVIVLLVVYAKKV). Over 35 to 50 (DWEEVWKVIRDYNRVA) the chain is Cytoplasmic. Residues 51 to 71 (LLSAVGLVVVSYLIYGCYDLL) traverse the membrane as a helical segment. Topologically, residues 72-85 (ARFYCGHKLAKRQV) are periplasmic. The chain crosses the membrane as a helical span at residues 86–106 (MLVSFICYAFNLTLSTWVGGI). Residues 107–125 (GMRYRLYSRLGLPGSTITR) are Cytoplasmic-facing. A helical transmembrane segment spans residues 126 to 146 (IFSLSITTNWLGYILLAGIIF). Topologically, residues 147–165 (TAGVVELPDHWYVDQTTLR) are periplasmic. The chain crosses the membrane as a helical span at residues 166–186 (ILGIGLLMIIAVYLWFCAFAK). The Cytoplasmic segment spans residues 187 to 205 (HRHMTIKGQKLVLPSWKFA). A helical membrane pass occupies residues 206-226 (LAQMLISSVNWMVMGAIIWLL). At 227–233 (LGQSVNY) the chain is on the periplasmic side. The next 2 membrane-spanning stretches (helical) occupy residues 234–254 (FFVL…HIPA) and 255–275 (GIGV…TSKG). The Periplasmic portion of the chain corresponds to 276–277 (TI). A helical transmembrane segment spans residues 278–298 (IAALLAYRVLYYFIPLLLALI). Residues 299–318 (CYLLLESQAKKLRAKNEAAM) are Cytoplasmic-facing.

To Synechocystis PCC 6803 slr0712.

The protein resides in the cell inner membrane. The polypeptide is Inner membrane protein YbhN (ybhN) (Escherichia coli (strain K12)).